Here is a 222-residue protein sequence, read N- to C-terminus: Physcion biosynthesis cluster O-methyltransferase (222 aa).

The protein belongs to the methyltransferase superfamily.

It carries out the reaction emodin + S-adenosyl-L-methionine = physcion + S-adenosyl-L-homocysteine. The protein operates within secondary metabolite biosynthesis. Its function is as follows. O-methyltransferase; part of the gene cluster that mediates the biosynthesis of physcion, a natural anthraquinone fungicide that can prevent plant fungal infections. Within the pathway, the O-methyltransferase AcOMT catalyzes the last step by transferring a methyl group to C-6 hydroxyl of emodin to form physcion. AcOMT may also methylate the C-6 hydroxyl group of emodin anthrone to produce physcion-anthrone B. The pathway begins with the polyketide synthase AcPKS that condenses 8 malonyl-CoA units to synthesize atrochrysone thioester which is released from the synthase by the atrochrysone carboxyl ACP thioesterase AcTE that breaks the thioester bond and leads to free atrochrysone carboxylic acid. Spontaneous decarboxylation of atrochrysone carboxylic acid leads to the formation of atrochrysone. Then, atrochrysone undergoes spontaneous dehydration and oxidation, giving the products emodin anthrone and emodin. The O-methyltransferase AcOMT then methylates the C-6 hydroxyl of emodin to form physcion. The chain is Physcion biosynthesis cluster O-methyltransferase from Aspergillus chevalieri (Eurotium chevalieri).